The primary structure comprises 697 residues: Elongation factor G (697 aa).

A tr-type G domain is found at E8–V290. GTP is bound by residues A17 to T24, D88 to H92, and N142 to D145.

This sequence belongs to the TRAFAC class translation factor GTPase superfamily. Classic translation factor GTPase family. EF-G/EF-2 subfamily.

It localises to the cytoplasm. Its function is as follows. Catalyzes the GTP-dependent ribosomal translocation step during translation elongation. During this step, the ribosome changes from the pre-translocational (PRE) to the post-translocational (POST) state as the newly formed A-site-bound peptidyl-tRNA and P-site-bound deacylated tRNA move to the P and E sites, respectively. Catalyzes the coordinated movement of the two tRNA molecules, the mRNA and conformational changes in the ribosome. This is Elongation factor G from Methylobacillus flagellatus (strain ATCC 51484 / DSM 6875 / VKM B-1610 / KT).